The sequence spans 365 residues: Chorismate synthase (365 aa).

The NADP(+) site is built by R48 and R54. FMN is bound by residues 125–127 (RAS), 237–238 (NA), G277, 292–296 (KPTSS), and R318.

The protein belongs to the chorismate synthase family. As to quaternary structure, homotetramer. FMNH2 is required as a cofactor.

The catalysed reaction is 5-O-(1-carboxyvinyl)-3-phosphoshikimate = chorismate + phosphate. The protein operates within metabolic intermediate biosynthesis; chorismate biosynthesis; chorismate from D-erythrose 4-phosphate and phosphoenolpyruvate: step 7/7. Its function is as follows. Catalyzes the anti-1,4-elimination of the C-3 phosphate and the C-6 proR hydrogen from 5-enolpyruvylshikimate-3-phosphate (EPSP) to yield chorismate, which is the branch point compound that serves as the starting substrate for the three terminal pathways of aromatic amino acid biosynthesis. This reaction introduces a second double bond into the aromatic ring system. In Polaromonas sp. (strain JS666 / ATCC BAA-500), this protein is Chorismate synthase.